Reading from the N-terminus, the 180-residue chain is Inorganic pyrophosphatase (180 aa).

Lysine 30, arginine 44, and tyrosine 56 together coordinate substrate. Positions 66, 71, and 103 each coordinate Mg(2+). Tyrosine 142 provides a ligand contact to substrate.

The protein belongs to the PPase family. As to quaternary structure, homohexamer. Requires Mg(2+) as cofactor.

Its subcellular location is the cytoplasm. The enzyme catalyses diphosphate + H2O = 2 phosphate + H(+). Catalyzes the hydrolysis of inorganic pyrophosphate (PPi) forming two phosphate ions. This Buchnera aphidicola subsp. Schizaphis graminum (strain Sg) protein is Inorganic pyrophosphatase.